The following is an 87-amino-acid chain: uncharacterized protein (87 aa).

Residues 63 to 83 (IVLALVLGVFSLVGLIFIIYF) form a helical membrane-spanning segment.

The protein localises to the membrane. This is an uncharacterized protein from Dictyostelium discoideum (Social amoeba).